The sequence spans 202 residues: Small ribosomal subunit protein uS4 (202 aa).

The S4 RNA-binding domain occupies 94–157 (SRLDSLVYRA…LEIPLIKNTL (64 aa)).

Belongs to the universal ribosomal protein uS4 family. Part of the 30S ribosomal subunit. Contacts protein S5. The interaction surface between S4 and S5 is involved in control of translational fidelity.

Its function is as follows. One of the primary rRNA binding proteins, it binds directly to 16S rRNA where it nucleates assembly of the body of the 30S subunit. With S5 and S12 plays an important role in translational accuracy. The chain is Small ribosomal subunit protein uS4 from Ureaplasma parvum serovar 3 (strain ATCC 27815 / 27 / NCTC 11736).